We begin with the raw amino-acid sequence, 194 residues long: uncharacterized protein (194 aa).

A helical membrane pass occupies residues Asp17–His37.

The protein belongs to the IIV-6 307L family.

It localises to the membrane. This is an uncharacterized protein from Invertebrate iridescent virus 3 (IIV-3).